A 294-amino-acid polypeptide reads, in one-letter code: MRIILITGISGSGKSVALNVLEDAGFYCVDNLPAQFIPDLARYLASEGYTHLGVATDIRSRESLEHLPDTVRELAETHQVEVLFLTASTDALVQRYSETRRRHPLSILTDGVPGSDGEPAFNDRALMEAIEMERELLSPLAESAHRIDTSNVRTNTLRSWIKELIREDSERLTLLFESFGFKHGVPSDADLVFDVRSLPNPYYDLALRPLTGRDGPVIDFLQAQPMVLAMAEDIRAYVEKWLPSFIADNRSYLTVAIGCTGGQHRSVYIAERLANYFRAHGNVLVRHRELAPAT.

Position 8-15 (8-15) interacts with ATP; that stretch reads GISGSGKS. 57-60 lines the GTP pocket; sequence DIRS.

It belongs to the RapZ-like family.

In terms of biological role, displays ATPase and GTPase activities. This is Nucleotide-binding protein Reut_A0350 from Cupriavidus pinatubonensis (strain JMP 134 / LMG 1197) (Cupriavidus necator (strain JMP 134)).